Here is a 165-residue protein sequence, read N- to C-terminus: Transmembrane protein 128 (165 aa).

The next 4 helical transmembrane spans lie at 49–69 (NIHSGFWILASIVVTYYVDFF), 81–101 (WFLCGSALLLVSLSIAFYCIV), 119–139 (LIPITTASFIAAGICFNIALW), and 144–164 (FFTPLLLFTQFMGVVMFITLL).

Its subcellular location is the membrane. The polypeptide is Transmembrane protein 128 (TMEM128) (Homo sapiens (Human)).